The following is a 2059-amino-acid chain: Non-reducing polyketide synthase stmB (2059 aa).

The Starter acyltransferase (SAT) domain occupies 7 to 243 (LLFGDQTVEL…LKLAAYGAVH (237 aa)). One can recognise a Ketosynthase family 3 (KS3) domain in the interval 366-796 (SNSIAIVGMA…GGNSCLILEE (431 aa)). Active-site for beta-ketoacyl synthase activity residues include cysteine 538, histidine 673, and histidine 713. The Malonyl-CoA:ACP transacylase (MAT) domain occupies 895–1185 (WVFSGQGSQY…CGSMVKATLG (291 aa)). Positions 1273 to 1413 (LHFVKKETVT…SASEWTDEWS (141 aa)) are N-terminal hotdog fold. The 309-residue stretch at 1273 to 1581 (LHFVKKETVT…FQRMPRMVLH (309 aa)) folds into the PKS/mFAS DH domain. Residue histidine 1306 is the Proton acceptor; for dehydratase activity of the active site. Positions 1435–1581 (GDHLRRPVVY…FQRMPRMVLH (147 aa)) are C-terminal hotdog fold. Aspartate 1495 functions as the Proton donor; for dehydratase activity in the catalytic mechanism. Residues 1619–1696 (PPKHDLADQL…DARRALGGDE (78 aa)) form the Carrier domain. The residue at position 1656 (serine 1656) is an O-(pantetheine 4'-phosphoryl)serine. The disordered stretch occupies residues 1693 to 1727 (GGDETASESENDAEGDAPSDGGSPSGSWTPISPPE). Residues 1697–1709 (TASESENDAEGDA) show a composition bias toward acidic residues. The segment covering 1710-1719 (PSDGGSPSGS) has biased composition (low complexity). The tract at residues 1778 to 2059 (AVEYKSNVVL…LGKLLQEAVA (282 aa)) is thioesterase (TE) domain.

Pantetheine 4'-phosphate is required as a cofactor.

It functions in the pathway mycotoxin biosynthesis. Functionally, non-reducing polyketide synthase; part of the gene cluster that mediates the biosynthesis of stromemycin, a depside C-glucoside with two unsaturated C9 side chains belonging to aromatic polyketide glycosides. The HR-PKS stmA and the NR-PKS stmB act as scaffold-generating enzymes responsible for the biosynthesis of the polyketide skeleton bininalkenylresorcylic acid. StmA condenses on acetyl-CoA starter unit with 4 malonyl-CoA units and the stmB uses 3 more malonyl-CoA units and catalyzes the depside bond formation. The glycoytransferase stmC then acts as the tailoring enzyme responsible for 3-C-glucosylation of bininalkenylresorcylic acid to yield stromemycin. This chain is Non-reducing polyketide synthase stmB, found in Aspergillus ustus.